A 336-amino-acid chain; its full sequence is Fructose-1,6-bisphosphatase class 1 (336 aa).

4 residues coordinate Mg(2+): Glu-90, Asp-112, Leu-114, and Asp-115. Residues 115-118, Asn-211, and Lys-277 each bind substrate; that span reads DGSS. Glu-283 provides a ligand contact to Mg(2+).

The protein belongs to the FBPase class 1 family. Homotetramer. Requires Mg(2+) as cofactor.

It localises to the cytoplasm. The catalysed reaction is beta-D-fructose 1,6-bisphosphate + H2O = beta-D-fructose 6-phosphate + phosphate. It participates in carbohydrate biosynthesis; gluconeogenesis. The chain is Fructose-1,6-bisphosphatase class 1 from Pseudomonas putida (strain ATCC 700007 / DSM 6899 / JCM 31910 / BCRC 17059 / LMG 24140 / F1).